Reading from the N-terminus, the 436-residue chain is Tol-Pal system protein TolB (436 aa).

A signal peptide spans 1–19 (MVKCSLIRALMVVAGLVGA).

Belongs to the TolB family. The Tol-Pal system is composed of five core proteins: the inner membrane proteins TolA, TolQ and TolR, the periplasmic protein TolB and the outer membrane protein Pal. They form a network linking the inner and outer membranes and the peptidoglycan layer.

The protein localises to the periplasm. Part of the Tol-Pal system, which plays a role in outer membrane invagination during cell division and is important for maintaining outer membrane integrity. This is Tol-Pal system protein TolB from Rhizobium etli (strain ATCC 51251 / DSM 11541 / JCM 21823 / NBRC 15573 / CFN 42).